Reading from the N-terminus, the 191-residue chain is Pyridoxal 5'-phosphate synthase subunit PdxT (191 aa).

Position 46-48 (46-48 (GES)) interacts with L-glutamine. C75 acts as the Nucleophile in catalysis. L-glutamine contacts are provided by residues R101 and 129–130 (IR). Residues H165 and E167 each act as charge relay system in the active site.

The protein belongs to the glutaminase PdxT/SNO family. In terms of assembly, in the presence of PdxS, forms a dodecamer of heterodimers. Only shows activity in the heterodimer.

The enzyme catalyses aldehydo-D-ribose 5-phosphate + D-glyceraldehyde 3-phosphate + L-glutamine = pyridoxal 5'-phosphate + L-glutamate + phosphate + 3 H2O + H(+). It carries out the reaction L-glutamine + H2O = L-glutamate + NH4(+). Its pathway is cofactor biosynthesis; pyridoxal 5'-phosphate biosynthesis. Its function is as follows. Catalyzes the hydrolysis of glutamine to glutamate and ammonia as part of the biosynthesis of pyridoxal 5'-phosphate. The resulting ammonia molecule is channeled to the active site of PdxS. This chain is Pyridoxal 5'-phosphate synthase subunit PdxT, found in Staphylococcus saprophyticus subsp. saprophyticus (strain ATCC 15305 / DSM 20229 / NCIMB 8711 / NCTC 7292 / S-41).